Reading from the N-terminus, the 220-residue chain is Ribose-5-phosphate isomerase A (220 aa).

Substrate contacts are provided by residues 28-31 (TGST), 81-84 (DGAD), and 94-97 (KGGG). Glu-103 acts as the Proton acceptor in catalysis. Lys-121 is a binding site for substrate.

The protein belongs to the ribose 5-phosphate isomerase family. In terms of assembly, homodimer.

The enzyme catalyses aldehydo-D-ribose 5-phosphate = D-ribulose 5-phosphate. It functions in the pathway carbohydrate degradation; pentose phosphate pathway; D-ribose 5-phosphate from D-ribulose 5-phosphate (non-oxidative stage): step 1/1. Catalyzes the reversible conversion of ribose-5-phosphate to ribulose 5-phosphate. The chain is Ribose-5-phosphate isomerase A from Shewanella putrefaciens (strain CN-32 / ATCC BAA-453).